Reading from the N-terminus, the 808-residue chain is Putative dimethyl sulfoxide reductase chain YnfE (808 aa).

Residues 1–43 constitute a signal peptide (tat-type signal); the sequence is MSKNERMVGISRRTLVKSTAIGSLALAAGGFSLPFTLRNAAAA. One can recognise a 4Fe-4S Mo/W bis-MGD-type domain in the interval 49–110; it reads EKVVWGACSV…SIRRRINHPD (62 aa). Cysteine 56, cysteine 60, cysteine 64, and cysteine 96 together coordinate [4Fe-4S] cluster. Mo-bis(molybdopterin guanine dinucleotide) is bound at residue serine 196.

Belongs to the prokaryotic molybdopterin-containing oxidoreductase family. [4Fe-4S] cluster serves as cofactor. The cofactor is Mo-bis(molybdopterin guanine dinucleotide). In terms of processing, exported by the Tat system. The position of the signal peptide cleavage has not been experimentally proven.

The protein localises to the cell membrane. Its function is as follows. Terminal reductase during anaerobic growth on various sulfoxide and N-oxide compounds. In Escherichia coli (strain K12), this protein is Putative dimethyl sulfoxide reductase chain YnfE (ynfE).